The sequence spans 146 residues: Large ribosomal subunit protein mL49 (146 aa).

The N-terminal 38 residues, 1–38, are a transit peptide targeting the mitochondrion; the sequence is MISSCVTRCFGRGKCLPGPATASIYQTIRCISTNSNKA.

The protein belongs to the mitochondrion-specific ribosomal protein mL49 family. As to quaternary structure, component of the mitochondrial large ribosomal subunit (mt-LSU). Mature yeast 74S mitochondrial ribosomes consist of a small (37S) and a large (54S) subunit. The 37S small subunit contains a 15S ribosomal RNA (15S mt-rRNA) and 34 different proteins. The 54S large subunit contains a 21S rRNA (21S mt-rRNA) and 46 different proteins.

The protein localises to the mitochondrion. In terms of biological role, component of the mitochondrial ribosome (mitoribosome), a dedicated translation machinery responsible for the synthesis of mitochondrial genome-encoded proteins, including at least some of the essential transmembrane subunits of the mitochondrial respiratory chain. The mitoribosomes are attached to the mitochondrial inner membrane and translation products are cotranslationally integrated into the membrane. The sequence is that of Large ribosomal subunit protein mL49 (IMG2) from Saccharomyces cerevisiae (strain ATCC 204508 / S288c) (Baker's yeast).